The following is a 78-amino-acid chain: Large ribosomal subunit protein bL28 (78 aa).

Residues 1–20 are compositionally biased toward polar residues; it reads MSRVCQLTGTRANNGMSVSH. The segment at 1–23 is disordered; it reads MSRVCQLTGTRANNGMSVSHSHI.

The protein belongs to the bacterial ribosomal protein bL28 family.

This Prochlorococcus marinus (strain NATL2A) protein is Large ribosomal subunit protein bL28.